The chain runs to 194 residues: MKIFFIDNFDSFSYNLVYELECLGYEVAVYQNDIDPSYLMDLMNEESKTPLLFISPGPGNPNSSGNLLKIIAMAKKKFPILGICLGLQALAQSYGAKIIRSKEIVHGKATAIALKKHAVFKGLGESMVVGRYHSLMASGLPKNLEVIAEHDNIPMAIVNEEDKILAYQFHPESIMTLQGRALLEQSVGFLEGLL.

Residues 2-194 (KIFFIDNFDS…QSVGFLEGLL (193 aa)) form the Glutamine amidotransferase type-1 domain. L-glutamine is bound at residue 57–59 (GPG). Cys84 acts as the Nucleophile; for GATase activity in catalysis. Residues Gln88 and 134–135 (SL) contribute to the L-glutamine site. Catalysis depends on for GATase activity residues His170 and Glu172.

As to quaternary structure, heterotetramer consisting of two non-identical subunits: a beta subunit (TrpG) and a large alpha subunit (TrpE).

The catalysed reaction is chorismate + L-glutamine = anthranilate + pyruvate + L-glutamate + H(+). The protein operates within amino-acid biosynthesis; L-tryptophan biosynthesis; L-tryptophan from chorismate: step 1/5. Its function is as follows. Part of a heterotetrameric complex that catalyzes the two-step biosynthesis of anthranilate, an intermediate in the biosynthesis of L-tryptophan. In the first step, the glutamine-binding beta subunit (TrpG) of anthranilate synthase (AS) provides the glutamine amidotransferase activity which generates ammonia as a substrate that, along with chorismate, is used in the second step, catalyzed by the large alpha subunit of AS (TrpE) to produce anthranilate. In the absence of TrpG, TrpE can synthesize anthranilate directly from chorismate and high concentrations of ammonia. In Helicobacter pylori (strain ATCC 700392 / 26695) (Campylobacter pylori), this protein is Anthranilate synthase component 2 (trpG).